The following is a 717-amino-acid chain: Radial spoke head protein 6 homolog A (717 aa).

4 disordered regions span residues 1 to 65, 503 to 523, 563 to 588, and 672 to 717; these read MGDL…SLSQ, SEEEGDEEEEGGAGRDSYEEN, TEEEEDLGEEEEKADEGPEEVEQEVG, and GPEI…ETDD. 3 stretches are compositionally biased toward acidic residues: residues 503-513, 564-585, and 700-717; these read SEEEGDEEEEG, EEEEDLGEEEEKADEGPEEVEQ, and TEEEEEGEEEEEGEETDD.

Belongs to the flagellar radial spoke RSP4/6 family. In terms of assembly, component of the axonemal radial spoke 1 (RS1) and 2 (RS2) complexes, at least composed of spoke head proteins RSPH1, RSPH3, RSPH9 and the cilia-specific component RSPH4A or sperm-specific component RSPH6A, spoke stalk proteins RSPH14, DNAJB13, DYDC1, ROPN1L and NME5, and the RS1 complex-specific anchor protein IQUB. Interacts with RSPH1. Interacts with RSPH3B. Interacts with RSPH4A. Interacts with RSPH9. Interacts with RSPH10B. In terms of processing, phosphorylated by PKA. Phosphorylation increases in capacitated sperm.

Its subcellular location is the cytoplasm. It is found in the cytoskeleton. The protein resides in the flagellum axoneme. Functionally, functions as part of radial spoke complexes in the axoneme of sperm flagella that play an important part in motility. The triple radial spokes (RS1, RS2 and RS3) are required to modulate beating of the sperm flagellum. The sequence is that of Radial spoke head protein 6 homolog A from Homo sapiens (Human).